A 439-amino-acid chain; its full sequence is Tol-Pal system protein TolB (439 aa).

The signal sequence occupies residues Met-1–Ala-22.

This sequence belongs to the TolB family. As to quaternary structure, the Tol-Pal system is composed of five core proteins: the inner membrane proteins TolA, TolQ and TolR, the periplasmic protein TolB and the outer membrane protein Pal. They form a network linking the inner and outer membranes and the peptidoglycan layer.

The protein localises to the periplasm. Part of the Tol-Pal system, which plays a role in outer membrane invagination during cell division and is important for maintaining outer membrane integrity. This is Tol-Pal system protein TolB from Xanthomonas campestris pv. campestris (strain 8004).